The sequence spans 1505 residues: Anaphase-promoting complex subunit 1 (1505 aa).

It belongs to the APC1 family. In terms of assembly, the APC/C complex is probably composed of at least 12 subunits: apc-2, apc-10, apc-11, cdc-26, emb-1, emb-27, emb-30, mat-1, mat-2, mat-3, such-1 and gfi-3.

It participates in protein modification; protein ubiquitination. Functionally, probable component of the anaphase promoting complex/cyclosome (APC/C), a cell cycle-regulated E3 ubiquitin ligase that controls progression through mitosis and the G1 phase of the cell cycle. The APC/C complex acts by mediating ubiquitination and subsequent degradation of target proteins. Developmental role in early embryogenesis and the metaphase to anaphase transition in oocyte and spermatocyte meiosis and mitosis in germ cells. Required for embryonic anterior-posterior axis formation. Plays a role in regulating the abundance of glr-1 receptors in postmitotic neurons, which may in turn control animal locomotion. Involved in regulating GABA neurotransmitter release at neuromuscular junctions in GABA motor neurons. The chain is Anaphase-promoting complex subunit 1 from Caenorhabditis elegans.